The sequence spans 463 residues: Ribulose bisphosphate carboxylase (463 aa).

Residue asparagine 116 participates in substrate binding. Residue lysine 171 is the Proton acceptor of the active site. Lysine 173 is a binding site for substrate. The Mg(2+) site is built by lysine 196, aspartate 198, and glutamate 199. Position 196 is an N6-carboxylysine (lysine 196). Catalysis depends on histidine 294, which acts as the Proton acceptor. The substrate site is built by arginine 295, histidine 328, and serine 375.

Belongs to the RuBisCO large chain family. Type II subfamily. Homodimer. Mg(2+) is required as a cofactor.

It carries out the reaction 2 (2R)-3-phosphoglycerate + 2 H(+) = D-ribulose 1,5-bisphosphate + CO2 + H2O. The catalysed reaction is D-ribulose 1,5-bisphosphate + O2 = 2-phosphoglycolate + (2R)-3-phosphoglycerate + 2 H(+). Its function is as follows. RuBisCO catalyzes two reactions: the carboxylation of D-ribulose 1,5-bisphosphate, the primary event in carbon dioxide fixation, as well as the oxidative fragmentation of the pentose substrate. Both reactions occur simultaneously and in competition at the same active site. In Hydrogenovibrio marinus, this protein is Ribulose bisphosphate carboxylase.